Consider the following 485-residue polypeptide: tRNA sulfurtransferase (485 aa).

Residues 61–165 (EELIALLQRI…DDKMMLVKAR (105 aa)) form the THUMP domain. ATP contacts are provided by residues 183-184 (LI), K265, G287, and Q296. C344 and C456 form a disulfide bridge. In terms of domain architecture, Rhodanese spans 404–483 (LGENEVILDI…FSNVRVFAKN (80 aa)). Catalysis depends on C456, which acts as the Cysteine persulfide intermediate.

The protein belongs to the ThiI family.

The protein resides in the cytoplasm. It catalyses the reaction [ThiI sulfur-carrier protein]-S-sulfanyl-L-cysteine + a uridine in tRNA + 2 reduced [2Fe-2S]-[ferredoxin] + ATP + H(+) = [ThiI sulfur-carrier protein]-L-cysteine + a 4-thiouridine in tRNA + 2 oxidized [2Fe-2S]-[ferredoxin] + AMP + diphosphate. The catalysed reaction is [ThiS sulfur-carrier protein]-C-terminal Gly-Gly-AMP + S-sulfanyl-L-cysteinyl-[cysteine desulfurase] + AH2 = [ThiS sulfur-carrier protein]-C-terminal-Gly-aminoethanethioate + L-cysteinyl-[cysteine desulfurase] + A + AMP + 2 H(+). The protein operates within cofactor biosynthesis; thiamine diphosphate biosynthesis. In terms of biological role, catalyzes the ATP-dependent transfer of a sulfur to tRNA to produce 4-thiouridine in position 8 of tRNAs, which functions as a near-UV photosensor. Also catalyzes the transfer of sulfur to the sulfur carrier protein ThiS, forming ThiS-thiocarboxylate. This is a step in the synthesis of thiazole, in the thiamine biosynthesis pathway. The sulfur is donated as persulfide by IscS. In Haemophilus influenzae (strain PittGG), this protein is tRNA sulfurtransferase.